The following is a 344-amino-acid chain: Putative F-box/kelch-repeat protein At1g19930 (344 aa).

The 47-residue stretch at 8–54 (TELIFSLPNDLLVNILARVSRLDYPILSLVSKRFSSVLTLPELYQTR) folds into the F-box domain. Kelch repeat units lie at residues 122–168 (NIYN…LLDG), 170–195 (IYVTGGCRLTFHGCGDQTDNVVVDGK), 196–241 (LHSC…YYYY), and 243–276 (NENIKWYDTKVRSWRTLNGLKTLPRFARYANVRL).

The protein is Putative F-box/kelch-repeat protein At1g19930 of Arabidopsis thaliana (Mouse-ear cress).